Reading from the N-terminus, the 917-residue chain is Protein translocase subunit SecA (917 aa).

Residues glutamine 87, 105–109, and aspartate 516 each bind ATP; that span reads GEGKT. 4 residues coordinate Zn(2+): cysteine 901, cysteine 903, cysteine 912, and histidine 913.

It belongs to the SecA family. As to quaternary structure, monomer and homodimer. Part of the essential Sec protein translocation apparatus which comprises SecA, SecYEG and auxiliary proteins SecDF-YajC and YidC. It depends on Zn(2+) as a cofactor.

The protein localises to the cell inner membrane. The protein resides in the cytoplasm. The catalysed reaction is ATP + H2O + cellular proteinSide 1 = ADP + phosphate + cellular proteinSide 2.. In terms of biological role, part of the Sec protein translocase complex. Interacts with the SecYEG preprotein conducting channel. Has a central role in coupling the hydrolysis of ATP to the transfer of proteins into and across the cell membrane, serving both as a receptor for the preprotein-SecB complex and as an ATP-driven molecular motor driving the stepwise translocation of polypeptide chains across the membrane. This chain is Protein translocase subunit SecA, found in Acidovorax ebreus (strain TPSY) (Diaphorobacter sp. (strain TPSY)).